A 272-amino-acid chain; its full sequence is MDTFAVFGNPINHSRSPRIHALFVAETGITHPYGRVLAPLDGFEQTLRQFFDAGGLGANITLPFKERAFSLCDQLTERGALAGAVNTIKKQPDGSLLGDNTDGIGLVSDLQRLDLLRQDSRVLLVGVGGAARGVVLPLLAYGCKVVLTNRTFPRAQKLVGFYHHVGDISALPLERLGTPDYDLIINATSTGVQGSIPPLPASLITSSVCCYDMYYQQGDTPFITWCRRQGSLRCADGLGMLVGQAASSFLLWHGVLPSVLPVLETLRAELSA.

Shikimate contacts are provided by residues S14–S16 and T61. K65 functions as the Proton acceptor in the catalytic mechanism. An NADP(+)-binding site is contributed by E77. N86 and D102 together coordinate shikimate. NADP(+) contacts are provided by residues G126–A130, N149–R154, and M213. Y215 lines the shikimate pocket. G237 is a binding site for NADP(+).

This sequence belongs to the shikimate dehydrogenase family. As to quaternary structure, homodimer.

The enzyme catalyses shikimate + NADP(+) = 3-dehydroshikimate + NADPH + H(+). It participates in metabolic intermediate biosynthesis; chorismate biosynthesis; chorismate from D-erythrose 4-phosphate and phosphoenolpyruvate: step 4/7. Functionally, involved in the biosynthesis of the chorismate, which leads to the biosynthesis of aromatic amino acids. Catalyzes the reversible NADPH linked reduction of 3-dehydroshikimate (DHSA) to yield shikimate (SA). The protein is Shikimate dehydrogenase (NADP(+)) of Sodalis glossinidius (strain morsitans).